The primary structure comprises 293 residues: Undecaprenyl-diphosphatase (293 aa).

The next 5 helical transmembrane spans lie at 107-127, 134-154, 207-227, 243-263, and 268-288; these read WMII…KDLI, MWIT…AEKV, FSFL…LPDA, IGTL…MKFV, and FSWF…LLWL.

This sequence belongs to the UppP family.

It is found in the cell membrane. The catalysed reaction is di-trans,octa-cis-undecaprenyl diphosphate + H2O = di-trans,octa-cis-undecaprenyl phosphate + phosphate + H(+). Functionally, catalyzes the dephosphorylation of undecaprenyl diphosphate (UPP). Confers resistance to bacitracin. This Corynebacterium efficiens (strain DSM 44549 / YS-314 / AJ 12310 / JCM 11189 / NBRC 100395) protein is Undecaprenyl-diphosphatase.